The sequence spans 195 residues: CDP-diacylglycerol--glycerol-3-phosphate 3-phosphatidyltransferase (195 aa).

Transmembrane regions (helical) follow at residues 7-24, 60-81, 134-150, and 157-173; these read ITVL…LFYL, FGAF…VLLV, MLAL…FTFW, and FLLI…LQYL.

Belongs to the CDP-alcohol phosphatidyltransferase class-I family.

The protein localises to the cell membrane. It carries out the reaction a CDP-1,2-diacyl-sn-glycerol + sn-glycerol 3-phosphate = a 1,2-diacyl-sn-glycero-3-phospho-(1'-sn-glycero-3'-phosphate) + CMP + H(+). Its pathway is phospholipid metabolism; phosphatidylglycerol biosynthesis; phosphatidylglycerol from CDP-diacylglycerol: step 1/2. This protein catalyzes the committed step to the synthesis of the acidic phospholipids. This Pseudomonas fluorescens protein is CDP-diacylglycerol--glycerol-3-phosphate 3-phosphatidyltransferase (pgsA).